We begin with the raw amino-acid sequence, 269 residues long: Aquaporin-7 (269 aa).

Residues 1 to 20 (MAGSVLENIQSVLQKTWVRE) are Cytoplasmic-facing. Serine 4 carries the post-translational modification Phosphoserine. A helical transmembrane segment spans residues 21-38 (FLAEFLSTYVLMVFGLGS). Topologically, residues 39-51 (VAHMVLGERLGSY) are extracellular. A helical membrane pass occupies residues 52 to 69 (LGVNLGFGFGVTMGIHVA). Residues 70–73 (GGIS) are Cytoplasmic-facing. Residues 74-87 (GAHMNAAVTFTNCA) constitute an intramembrane region (discontinuously helical). The short motif at 78–80 (NAA) is the NPA 1 element. Topologically, residues 88–95 (LGRMAWKK) are cytoplasmic. Residues 96-116 (FPIYVLGQFLGSFLAAATTYL) form a helical membrane-spanning segment. The Extracellular portion of the chain corresponds to 117-151 (IFYGAINHYAGGELLVTGPKSTANIFATYLPEHMT). A helical membrane pass occupies residues 152–172 (LWRGFVDEVFVTGMLQLCIFA). The Cytoplasmic portion of the chain corresponds to 173–184 (ITDKLNSPALQG). A helical membrane pass occupies residues 185–201 (TEPLMIGILVCVLGVSL). The Extracellular portion of the chain corresponds to 202-205 (GMNT). An intramembrane region (discontinuously helical) is located at residues 206 to 219 (GYAINPSRDLPPRF). Positions 210 to 212 (NPS) match the NPA 2 motif. The Extracellular segment spans residues 220–237 (FTFIAGWGKKVFSAGNNW). The helical transmembrane segment at 238–259 (WWVPVVAPLLGAYLGGIVYLGL) threads the bilayer. At 260–269 (IHAGIPPQGS) the chain is on the cytoplasmic side.

This sequence belongs to the MIP/aquaporin (TC 1.A.8) family. Homotetramer; each monomer provides an independent glycerol/water pore. Two homotetramers on opposing membranes can dimerize, forming a cell-cell junction. Interacts with PLIN1. Post-translationally, phosphorylation by PKA could prevent the interaction with PLIN1. As to expression, detected in heart, kidney and testis.

It is found in the cell membrane. The protein resides in the cytoplasmic vesicle membrane. Its subcellular location is the lipid droplet. It catalyses the reaction glycerol(in) = glycerol(out). It carries out the reaction H2O(in) = H2O(out). The enzyme catalyses urea(in) = urea(out). Its activity is regulated as follows. Glycerol transport is regulated by pH, with the porin being permeable to glycerol at pH 7.4 but not at pH 5.5. Water permeability, however, is not influenced by pH. Not inhibited by mercury ions. In terms of biological role, aquaglyceroporins form homotetrameric transmembrane channels, with each monomer independently mediating glycerol and water transport across the plasma membrane along their osmotic gradient. Could also be permeable to urea. Mediates the efflux of glycerol, formed upon triglyceride hydrolysis, to avoid its accumulation in adipocytes and to make it available to other tissues. In the kidney, mediates the reabsorption of glycerol, preventing its loss in urine, again participating to energy homeostasis. In pancreatic beta cells, it also mediates the efflux of glycerol, regulating its intracellular levels. This is Aquaporin-7 from Rattus norvegicus (Rat).